The chain runs to 175 residues: MVTYIVFVLSIIFVISFVGVSSKPSPIYGGLGLIVGGGAGCGVVLSFGGSFLGLMVFLIYLGGMLVVFGYTTAMATEQYPEVWVSNKVVLGAFILGLVVESLIVIYALKSGEVKIVFEFDGLGDWVIYDTGGSGVFSEEATGIAALYSYGVWLVIVTGWSLFVSVVIIMEITRGN.

The next 5 helical transmembrane spans lie at 1-21 (MVTYIVFVLSIIFVISFVGVS), 25-45 (SPIYGGLGLIVGGGAGCGVVL), 47-67 (FGGSFLGLMVFLIYLGGMLVV), 88-108 (VVLGAFILGLVVESLIVIYAL), and 149-169 (YGVWLVIVTGWSLFVSVVIIM).

The protein belongs to the complex I subunit 6 family. Core subunit of respiratory chain NADH dehydrogenase (Complex I) which is composed of 45 different subunits.

It is found in the mitochondrion inner membrane. The enzyme catalyses a ubiquinone + NADH + 5 H(+)(in) = a ubiquinol + NAD(+) + 4 H(+)(out). In terms of biological role, core subunit of the mitochondrial membrane respiratory chain NADH dehydrogenase (Complex I) which catalyzes electron transfer from NADH through the respiratory chain, using ubiquinone as an electron acceptor. Essential for the catalytic activity and assembly of complex I. This Balaenoptera musculus (Blue whale) protein is NADH-ubiquinone oxidoreductase chain 6 (MT-ND6).